Consider the following 272-residue polypeptide: TLC domain-containing protein 4 C (272 aa).

A run of 7 helical transmembrane segments spans residues 16-36, 71-91, 103-123, 128-148, 155-175, 196-216, and 233-253; these read FSNS…FIIY, VSMI…VESF, SLLM…IICY, LVGT…IYVA, CFVP…PLNM, FVIT…IYLV, and VFIT…FLLI. Residues 61 to 261 form the TLC domain; the sequence is KKKLEWDQRV…LIKKLYQTYL (201 aa).

This sequence belongs to the TLCD4 family.

The protein resides in the membrane. The sequence is that of TLC domain-containing protein 4 C (tlcd4c) from Dictyostelium discoideum (Social amoeba).